A 96-amino-acid chain; its full sequence is LSM complex subunit lsm2 (96 aa).

The Sm domain occupies 2–76; that stretch reads LFYSFFKTLI…VRYVHMSSAY (75 aa).

This sequence belongs to the snRNP Sm proteins family. In terms of assembly, component of the heptameric LSM1-LSM7 complex that forms a seven-membered ring structure with a donut shape. The LSm subunits are arranged in the order lsm1, lsm2, lsm3, lsm6, lsm5, lsm7 and lsm4. Component of the heptameric LSM2-LSM8 complex that forms a seven-membered ring structure with a donut shape. The LSm subunits are arranged in the order lsm8, lsm2, lsm3, lsm6, lsm5, lsm7 and lsm4.

The protein localises to the nucleus. The protein resides in the cytoplasm. Its function is as follows. Component of LSm protein complexes, which are involved in RNA processing and may function in a chaperone-like manner. Component of the cytoplasmic LSM1-LSM7 complex which is involved in mRNA degradation by activating the decapping step. The LSM1-LSM7 complex loads onto the 3'-end of single stranded RNA. Component of the nuclear LSM2-LSM8 complex, which is involved in spliceosome assembly. The LSM2-LSM8 complex plays a role in the biogenesis of the spliceosomal U4/U6-U5 tri-snRNP complex by accelerating prp24-mediated annealing of U4/U6 di-snRNA. The LSM2-LSM8 complex binds U6 snRNA terminating with a cyclic 2',3' phosphate group; RNA with an unmodified 3' hydroxyl or non-cyclic 3' phosphate is bound less tightly. This Schizosaccharomyces pombe (strain 972 / ATCC 24843) (Fission yeast) protein is LSM complex subunit lsm2 (lsm2).